The primary structure comprises 78 residues: Large ribosomal subunit protein bL28 (78 aa).

The segment at 1 to 21 is disordered; the sequence is MSRVCQLSGKRANNGMAVSHS.

The protein belongs to the bacterial ribosomal protein bL28 family.

This is Large ribosomal subunit protein bL28 from Synechococcus sp. (strain RCC307).